A 130-amino-acid chain; its full sequence is Small ribosomal subunit protein uS8 (130 aa).

It belongs to the universal ribosomal protein uS8 family. As to quaternary structure, part of the 30S ribosomal subunit. Contacts proteins S5 and S12.

One of the primary rRNA binding proteins, it binds directly to 16S rRNA central domain where it helps coordinate assembly of the platform of the 30S subunit. The sequence is that of Small ribosomal subunit protein uS8 from Idiomarina loihiensis (strain ATCC BAA-735 / DSM 15497 / L2-TR).